The chain runs to 238 residues: Small ribosomal subunit protein eS4 (238 aa).

Positions 38–101 (LPLALIIRDV…GEVYRVVPDA (64 aa)) constitute an S4 RNA-binding domain.

It belongs to the eukaryotic ribosomal protein eS4 family.

This chain is Small ribosomal subunit protein eS4, found in Pyrobaculum aerophilum (strain ATCC 51768 / DSM 7523 / JCM 9630 / CIP 104966 / NBRC 100827 / IM2).